Reading from the N-terminus, the 308-residue chain is D-alanine--D-alanine ligase (308 aa).

The ATP-grasp domain occupies 102 to 302 (KHVAKAAGIP…FGEFLRWMVE (201 aa)). Residue 128-183 (PMKPPYVVKPVREGSSFGVVIVKEDQSHPPQVITSSDWRYGDRIMVERYVAGREFT) participates in ATP binding. 3 residues coordinate Mg(2+): D252, E269, and N271.

The protein belongs to the D-alanine--D-alanine ligase family. The cofactor is Mg(2+). Mn(2+) is required as a cofactor.

It is found in the cytoplasm. It carries out the reaction 2 D-alanine + ATP = D-alanyl-D-alanine + ADP + phosphate + H(+). It functions in the pathway cell wall biogenesis; peptidoglycan biosynthesis. Functionally, cell wall formation. The sequence is that of D-alanine--D-alanine ligase from Sinorhizobium medicae (strain WSM419) (Ensifer medicae).